The following is a 623-amino-acid chain: ATP-dependent lipid A-core flippase (623 aa).

5 helical membrane-spanning segments follow: residues 66-86, 103-123, 190-210, 290-310, and 317-337; these read LVLA…LAVI, VWFL…CNFF, LVVI…TLII, LTPL…AVAL, and ALTV…FDPI. Residues 67–349 form the ABC transmembrane type-1 domain; the sequence is VLAVLLMAGA…LTNLAGKMQK (283 aa). Positions 382-618 constitute an ABC transporter domain; sequence VEFRAVSHRF…NGLYASLYNM (237 aa). 416-423 is a binding site for ATP; sequence GRSGSGKT.

Belongs to the ABC transporter superfamily. Lipid exporter (TC 3.A.1.106) family. Homodimer.

The protein localises to the cell inner membrane. It catalyses the reaction ATP + H2O + lipid A-core oligosaccharideSide 1 = ADP + phosphate + lipid A-core oligosaccharideSide 2.. Functionally, involved in lipopolysaccharide (LPS) biosynthesis. Translocates lipid A-core from the inner to the outer leaflet of the inner membrane. Transmembrane domains (TMD) form a pore in the inner membrane and the ATP-binding domain (NBD) is responsible for energy generation. The sequence is that of ATP-dependent lipid A-core flippase from Bordetella pertussis (strain Tohama I / ATCC BAA-589 / NCTC 13251).